We begin with the raw amino-acid sequence, 152 residues long: D-aminoacyl-tRNA deacylase (152 aa).

The Gly-cisPro motif, important for rejection of L-amino acids signature appears at 138–139; that stretch reads GP.

It belongs to the DTD family. As to quaternary structure, homodimer.

The protein resides in the cytoplasm. It catalyses the reaction glycyl-tRNA(Ala) + H2O = tRNA(Ala) + glycine + H(+). The catalysed reaction is a D-aminoacyl-tRNA + H2O = a tRNA + a D-alpha-amino acid + H(+). Functionally, an aminoacyl-tRNA editing enzyme that deacylates mischarged D-aminoacyl-tRNAs. Also deacylates mischarged glycyl-tRNA(Ala), protecting cells against glycine mischarging by AlaRS. Acts via tRNA-based rather than protein-based catalysis; rejects L-amino acids rather than detecting D-amino acids in the active site. By recycling D-aminoacyl-tRNA to D-amino acids and free tRNA molecules, this enzyme counteracts the toxicity associated with the formation of D-aminoacyl-tRNA entities in vivo and helps enforce protein L-homochirality. The polypeptide is D-aminoacyl-tRNA deacylase (Chloroherpeton thalassium (strain ATCC 35110 / GB-78)).